A 303-amino-acid chain; its full sequence is uncharacterized protein (303 aa).

In terms of domain architecture, Fe2OG dioxygenase spans 173–300 (KLPELLGQLN…RFTVNGWIRK (128 aa)).

Fe(2+) is required as a cofactor. Requires L-ascorbate as cofactor.

This is an uncharacterized protein from Synechocystis sp. (strain ATCC 27184 / PCC 6803 / Kazusa).